The sequence spans 158 residues: Transcription elongation factor GreA (158 aa).

The stretch at 1–26 forms a coiled coil; the sequence is MNKVPLTEKGAQQLREELQELKTVVR.

Belongs to the GreA/GreB family.

In terms of biological role, necessary for efficient RNA polymerase transcription elongation past template-encoded arresting sites. The arresting sites in DNA have the property of trapping a certain fraction of elongating RNA polymerases that pass through, resulting in locked ternary complexes. Cleavage of the nascent transcript by cleavage factors such as GreA or GreB allows the resumption of elongation from the new 3'terminus. GreA releases sequences of 2 to 3 nucleotides. The sequence is that of Transcription elongation factor GreA from Nitrosococcus oceani (strain ATCC 19707 / BCRC 17464 / JCM 30415 / NCIMB 11848 / C-107).